The sequence spans 261 residues: Calbindin (261 aa).

Alanine 2 is modified (N-acetylalanine). Residues 2-7 (AESHLQ) are interaction with RANBP9. 5 consecutive EF-hand domains span residues 11–46 (ITAS…LLQA), 53–88 (ELSP…EENF), 98–133 (KSCE…LLEK), 142–177 (KLAE…QENF), and 186–221 (MCGK…LCEK). Ca(2+) contacts are provided by aspartate 24, aspartate 26, serine 28, tyrosine 30, and glutamate 35. Residues aspartate 111, aspartate 113, serine 115, glutamate 122, aspartate 155, asparagine 157, aspartate 159, lysine 161, glutamate 166, aspartate 199, aspartate 201, asparagine 203, tyrosine 205, and glutamate 210 each contribute to the Ca(2+) site.

It belongs to the calbindin family. Interacts with RANBP9.

Functionally, buffers cytosolic calcium. May stimulate a membrane Ca(2+)-ATPase and a 3',5'-cyclic nucleotide phosphodiesterase. This chain is Calbindin (Calb1), found in Rattus norvegicus (Rat).